A 502-amino-acid chain; its full sequence is Cytochrome P450 81D1 (502 aa).

The helical transmembrane segment at 6-26 threads the bilayer; sequence IRVVLYSIFSLIFLIISFKFL. Cys440 provides a ligand contact to heme.

It belongs to the cytochrome P450 family. Heme serves as cofactor.

It localises to the membrane. This Arabidopsis thaliana (Mouse-ear cress) protein is Cytochrome P450 81D1 (CYP81D1).